Consider the following 428-residue polypeptide: Proline--tRNA ligase (428 aa).

This sequence belongs to the class-II aminoacyl-tRNA synthetase family. ProS type 2 subfamily. As to quaternary structure, homodimer.

It localises to the cytoplasm. It carries out the reaction tRNA(Pro) + L-proline + ATP = L-prolyl-tRNA(Pro) + AMP + diphosphate. In terms of biological role, catalyzes the attachment of proline to tRNA(Pro) in a two-step reaction: proline is first activated by ATP to form Pro-AMP and then transferred to the acceptor end of tRNA(Pro). This chain is Proline--tRNA ligase, found in Rickettsia typhi (strain ATCC VR-144 / Wilmington).